Consider the following 830-residue polypeptide: Dimethylglycine oxidase (830 aa).

FAD is bound by residues 14–15 (IV), 35–36 (DQ), 45–48 (STSH), Leu52, and Val174. Residue His48 is modified to Pros-8alpha-FAD histidine. Catalysis depends on residues His225 and Tyr259. FAD is bound by residues Tyr259 and 360-363 (VWVT). Tyr539 contacts (6S)-5,6,7,8-tetrahydrofolate. The For 5,10-methylenetetrahydrofolate synthesis activity role is filled by Asp552. (6S)-5,6,7,8-tetrahydrofolate contacts are provided by residues Thr554, Gly566, and 658-660 (ELY).

The protein belongs to the GcvT family. It depends on FAD as a cofactor.

It carries out the reaction N,N-dimethylglycine + O2 + H2O = sarcosine + formaldehyde + H2O2. The enzyme catalyses N,N-dimethylglycine + (6S)-5,6,7,8-tetrahydrofolate + O2 = sarcosine + (6R)-5,10-methylene-5,6,7,8-tetrahydrofolate + H2O2. Catalyzes the oxidative demethylation of N,N-dimethylglycine to yield sarcosine, formaldehyde and hydrogen peroxide. The oxidation of dimethylglycine is coupled to the synthesis of 5,10-methylenetetrahydrofolate through an unusual substrate channeling mechanism. This channeling occurs by nonbiased diffusion of the iminium intermediate through a large solvent cavity connecting active site 1 (N-terminus) and active site 2 (C-terminus). The synthesis of 5,10-methylenetetrahydrofolate (at active site 2) prevents the accumulation of formaldehyde, formed by hydrolysis of the iminium intermediate product (at active site 1). Does not oxidize sarcosine. The chain is Dimethylglycine oxidase (dmg) from Arthrobacter globiformis.